Reading from the N-terminus, the 240-residue chain is Octanoyltransferase (240 aa).

Residues 1-22 (MGTTGTNDGATTPPANTSTPAV) are disordered. A compositionally biased stretch (low complexity) spans 10–21 (ATTPPANTSTPA). In terms of domain architecture, BPL/LPL catalytic spans 51 to 236 (EKIPDTILLL…NLVDALNGDL (186 aa)). Residues 89–96 (RGGRITWH), 166–168 (AIG), and 179–181 (GVA) each bind substrate. Cysteine 197 serves as the catalytic Acyl-thioester intermediate.

Belongs to the LipB family.

The protein localises to the cytoplasm. It carries out the reaction octanoyl-[ACP] + L-lysyl-[protein] = N(6)-octanoyl-L-lysyl-[protein] + holo-[ACP] + H(+). The protein operates within protein modification; protein lipoylation via endogenous pathway; protein N(6)-(lipoyl)lysine from octanoyl-[acyl-carrier-protein]: step 1/2. In terms of biological role, catalyzes the transfer of endogenously produced octanoic acid from octanoyl-acyl-carrier-protein onto the lipoyl domains of lipoate-dependent enzymes. Lipoyl-ACP can also act as a substrate although octanoyl-ACP is likely to be the physiological substrate. The protein is Octanoyltransferase of Corynebacterium jeikeium (strain K411).